The primary structure comprises 802 residues: Copper-exporting P-type ATPase (802 aa).

2 HMA domains span residues 5 to 70 and 72 to 138; these read KKTT…YGVT and ETVE…YDAS. Cu(+) is bound by residues cysteine 16, cysteine 19, cysteine 83, and cysteine 86. A run of 6 helical transmembrane segments spans residues 161-181, 192-212, 224-244, 256-276, 411-431, and 438-458; these read LIIS…HLFN, WFQF…FYVG, MDVL…YEMV, LYFE…YLEA, YFVP…ITLV, and PALV…LGLA. The active-site 4-aspartylphosphate intermediate is the aspartate 495. Mg(2+) is bound by residues aspartate 690 and aspartate 694. A run of 2 helical transmembrane segments spans residues 748 to 767 and 771 to 790; these read LFWA…LGLL and VAGA…ALRL.

Belongs to the cation transport ATPase (P-type) (TC 3.A.3) family. Type IB subfamily.

The protein resides in the cell membrane. The enzyme catalyses Cu(+)(in) + ATP + H2O = Cu(+)(out) + ADP + phosphate + H(+). Functionally, involved in copper export. The sequence is that of Copper-exporting P-type ATPase (copA) from Staphylococcus aureus (strain N315).